A 481-amino-acid polypeptide reads, in one-letter code: Putative amino-acid transporter CPE0389 (481 aa).

13 consecutive transmembrane segments (helical) span residues 7 to 27 (LGVI…GVYN), 36 to 56 (ASAG…WFIA), 87 to 107 (FLMA…YAVL), 127 to 147 (LSIA…LAGV), 156 to 176 (IGTI…LFSF), 208 to 228 (STML…VVSG), 241 to 261 (FLGF…PLGV), 289 to 309 (VIMN…WTVM), 338 to 358 (FSLL…HFAG), 364 to 384 (MLSI…LYLF), 401 to 421 (RKYA…LIYA), 422 to 442 (AGIN…PVFI), and 461 to 481 (YFAI…FKFM).

This sequence belongs to the amino acid-polyamine-organocation (APC) superfamily. Basic amino acid/polyamine antiporter (APA) (TC 2.A.3.2) family.

It localises to the cell membrane. Could be an amino acid transporter. The polypeptide is Putative amino-acid transporter CPE0389 (Clostridium perfringens (strain 13 / Type A)).